A 793-amino-acid polypeptide reads, in one-letter code: RNA-binding protein spenito (793 aa).

2 disordered regions span residues 1-93 and 243-296; these read MSSH…PPAE and HHDY…KKDK. The segment covering 25 to 42 has biased composition (low complexity); sequence SRSPGPASRSSLSRNSRS. Basic residues predominate over residues 257–268; it reads RGGHPHHLHGHA. Basic and acidic residues predominate over residues 285-296; the sequence is APYEKPESKKDK. RRM domains follow at residues 314–391 and 395–469; these read RTLF…YGKV and TRMW…FAEL. A disordered region spans residues 507-623; the sequence is YAPRGGYSPY…RNDALASAST (117 aa). The span at 526–536 shows a compositional bias: basic residues; the sequence is GGYRGRGRGMY. Residues 566–593 show a composition bias toward basic and acidic residues; it reads DEWRRPPGESYDRGARSSSREPGVERSR. The 168-residue stretch at 624–791 folds into the SPOC domain; the sequence is VPDVARKCST…HLVIVVVRGG (168 aa).

The protein belongs to the RRM Spen family. Component of the WMM complex, a N6-methyltransferase complex composed of a catalytic subcomplex, named MAC, and of an associated subcomplex, named MACOM. The MAC subcomplex is composed of Ime4/Mettl3 and Mettl14. The MACOM subcomplex is composed of fl(2)d, Flacc/Xio, Hakai, vir, and, in some cases of nito. Interacts with Sxl. Interacts with Hipk; leading to phosphorylation. Post-translationally, phosphorylated by Hipk at Ser-23, Ser-25 and/or Ser-27; the precise position if phosphorylation sites is unknown. Widely expressed. Shows some enrichment in the central nervous system.

The protein resides in the nucleus. Functionally, RNA-binding protein that acts as an associated component of the WMM complex, a complex that mediates N6-methyladenosine (m6A) methylation of mRNAs. M6a modification plays a role in the efficiency of mRNA splicing and is required for sex determination. In the WMM complex, may act by binding target RNAs and recruiting the WMM complex. Required for sex determination and dosage compensation via Sxl alternative splicing: m6A methylation acts as a key regulator of Sxl pre-mRNA and promotes female-specific alternative splicing of Sxl, which determines female physiognomy. M6A methylation is also required for neuronal functions. Acts as a positive regulator of canonical Wg signaling during wing disk and eye development. In Drosophila melanogaster (Fruit fly), this protein is RNA-binding protein spenito.